A 140-amino-acid polypeptide reads, in one-letter code: Nucleoside diphosphate kinase (140 aa).

ATP is bound by residues K11, F59, R87, T93, R104, and N114. H117 (pros-phosphohistidine intermediate) is an active-site residue.

Belongs to the NDK family. The cofactor is Mg(2+).

It is found in the cytoplasm. The catalysed reaction is a 2'-deoxyribonucleoside 5'-diphosphate + ATP = a 2'-deoxyribonucleoside 5'-triphosphate + ADP. The enzyme catalyses a ribonucleoside 5'-diphosphate + ATP = a ribonucleoside 5'-triphosphate + ADP. Major role in the synthesis of nucleoside triphosphates other than ATP. The ATP gamma phosphate is transferred to the NDP beta phosphate via a ping-pong mechanism, using a phosphorylated active-site intermediate. In Metallosphaera sedula (strain ATCC 51363 / DSM 5348 / JCM 9185 / NBRC 15509 / TH2), this protein is Nucleoside diphosphate kinase.